Here is a 544-residue protein sequence, read N- to C-terminus: Chaperonin GroEL (544 aa).

ATP contacts are provided by residues 29-32 (TLGP), 86-90 (DGTTT), G413, 476-478 (NAA), and D492.

It belongs to the chaperonin (HSP60) family. Forms a cylinder of 14 subunits composed of two heptameric rings stacked back-to-back. Interacts with the co-chaperonin GroES.

The protein resides in the cytoplasm. It catalyses the reaction ATP + H2O + a folded polypeptide = ADP + phosphate + an unfolded polypeptide.. Together with its co-chaperonin GroES, plays an essential role in assisting protein folding. The GroEL-GroES system forms a nano-cage that allows encapsulation of the non-native substrate proteins and provides a physical environment optimized to promote and accelerate protein folding. The sequence is that of Chaperonin GroEL from Bacillus velezensis (strain DSM 23117 / BGSC 10A6 / LMG 26770 / FZB42) (Bacillus amyloliquefaciens subsp. plantarum).